The sequence spans 735 residues: Translation initiation factor IF-2, chloroplastic (735 aa).

The tr-type G domain occupies 239–411; that stretch reads RRAPIVTILG…ILLMADIENY (173 aa). A G1 region spans residues 248 to 255; that stretch reads GHVDHGKT. 248-255 contacts GTP; sequence GHVDHGKT. The G2 stretch occupies residues 273 to 277; the sequence is GITQK. The segment at 298-301 is G3; that stretch reads DTPG. GTP-binding positions include 298–302 and 352–355; these read DTPGH and NKID. The segment at 352-355 is G4; the sequence is NKID. Positions 388–390 are G5; the sequence is SAS.

It belongs to the TRAFAC class translation factor GTPase superfamily. Classic translation factor GTPase family. IF-2 subfamily.

Its subcellular location is the plastid. It localises to the chloroplast. Its function is as follows. One of the essential components for the initiation of protein synthesis. Protects formylmethionyl-tRNA from spontaneous hydrolysis and promotes its binding to the 30S ribosomal subunits. Also involved in the hydrolysis of GTP during the formation of the 70S ribosomal complex. The chain is Translation initiation factor IF-2, chloroplastic (infB) from Guillardia theta (Cryptophyte).